A 212-amino-acid chain; its full sequence is Imidazole glycerol phosphate synthase subunit HisH (212 aa).

The 211-residue stretch at 1 to 211 folds into the Glutamine amidotransferase type-1 domain; sequence MIGVIDYGMG…TKMAAEQQVK (211 aa). Cys79 functions as the Nucleophile in the catalytic mechanism. Catalysis depends on residues His186 and Glu188.

In terms of assembly, heterodimer of HisH and HisF.

It localises to the cytoplasm. The enzyme catalyses 5-[(5-phospho-1-deoxy-D-ribulos-1-ylimino)methylamino]-1-(5-phospho-beta-D-ribosyl)imidazole-4-carboxamide + L-glutamine = D-erythro-1-(imidazol-4-yl)glycerol 3-phosphate + 5-amino-1-(5-phospho-beta-D-ribosyl)imidazole-4-carboxamide + L-glutamate + H(+). The catalysed reaction is L-glutamine + H2O = L-glutamate + NH4(+). The protein operates within amino-acid biosynthesis; L-histidine biosynthesis; L-histidine from 5-phospho-alpha-D-ribose 1-diphosphate: step 5/9. IGPS catalyzes the conversion of PRFAR and glutamine to IGP, AICAR and glutamate. The HisH subunit catalyzes the hydrolysis of glutamine to glutamate and ammonia as part of the synthesis of IGP and AICAR. The resulting ammonia molecule is channeled to the active site of HisF. The protein is Imidazole glycerol phosphate synthase subunit HisH of Bacillus velezensis (strain DSM 23117 / BGSC 10A6 / LMG 26770 / FZB42) (Bacillus amyloliquefaciens subsp. plantarum).